We begin with the raw amino-acid sequence, 511 residues long: ATP synthase subunit alpha (511 aa).

169–176 (GDRQTGKT) lines the ATP pocket.

Belongs to the ATPase alpha/beta chains family. F-type ATPases have 2 components, CF(1) - the catalytic core - and CF(0) - the membrane proton channel. CF(1) has five subunits: alpha(3), beta(3), gamma(1), delta(1), epsilon(1). CF(0) has three main subunits: a(1), b(2) and c(9-12). The alpha and beta chains form an alternating ring which encloses part of the gamma chain. CF(1) is attached to CF(0) by a central stalk formed by the gamma and epsilon chains, while a peripheral stalk is formed by the delta and b chains.

The protein localises to the cell inner membrane. The catalysed reaction is ATP + H2O + 4 H(+)(in) = ADP + phosphate + 5 H(+)(out). Functionally, produces ATP from ADP in the presence of a proton gradient across the membrane. The alpha chain is a regulatory subunit. The chain is ATP synthase subunit alpha from Bartonella bacilliformis (strain ATCC 35685 / KC583 / Herrer 020/F12,63).